The following is a 141-amino-acid chain: Short-chain diamines transporter (141 aa).

The next 4 membrane-spanning stretches (helical) occupy residues 16–36, 39–59, 76–96, and 103–123; these read VILL…PLEV, TLGI…NHFF, ILHA…MVAY, and WQAI…TFIF.

Belongs to the proteobacterial antimicrobial compound efflux (PACE) (TC 2.A.117) family.

Its subcellular location is the cell inner membrane. Its function is as follows. Mediates the efflux of short-chain diamines when energized by an electrochemical gradient. Involved in resistance to the synthetic biocide chlorhexidine, a widely used antiseptic and disinfectant in both hospital and community settings. Interacts directly with chlorhexidine and mediates its efflux via an energy-dependent mechanism. This Acinetobacter baylyi (strain ATCC 33305 / BD413 / ADP1) protein is Short-chain diamines transporter.